The sequence spans 264 residues: Major prion protein (264 aa).

The signal sequence occupies residues 1-24; that stretch reads MVKSHIGSWILVLFVAMWSDVGLC. The segment at 25–241 is interaction with GRB2, ERI3 and SYN1; sequence KKRPKPGGGW…ESQAYYQRGA (217 aa). A disordered region spans residues 28 to 119; sequence PKPGGGWNTG…WNKPSKPKTN (92 aa). A run of 6 repeats spans residues 54–62, 63–70, 71–78, 79–86, 87–94, and 95–103. Positions 54–103 are 6 X 8 AA tandem repeats of P-H-G-G-G-W-G-Q; it reads PQGGGGWGQPHGGGWGQPHGGGWGQPHGGGWGQPHGGGWGQPHGGGGWGQ. Residues 55 to 105 are compositionally biased toward gly residues; it reads QGGGGWGQPHGGGWGQPHGGGWGQPHGGGWGQPHGGGWGQPHGGGGWGQGG. Cu(2+) is bound by residues histidine 72, glycine 73, glycine 74, histidine 80, glycine 81, glycine 82, histidine 88, glycine 89, glycine 90, histidine 96, glycine 98, and glycine 99. Cysteines 190 and 225 form a disulfide. Residues asparagine 192 and asparagine 208 are each glycosylated (N-linked (GlcNAc...) asparagine). The GPI-anchor amidated alanine moiety is linked to residue alanine 241. Positions 242–264 are cleaved as a propeptide — removed in mature form; it reads SVILFSSPPVILLISFLIFLIVG.

The protein belongs to the prion family. Monomer and homodimer. Has a tendency to aggregate into amyloid fibrils containing a cross-beta spine, formed by a steric zipper of superposed beta-strands. Soluble oligomers may represent an intermediate stage on the path to fibril formation. Copper binding may promote oligomerization. Interacts with GRB2, APP, ERI3/PRNPIP and SYN1. Mislocalized cytosolically exposed PrP interacts with MGRN1; this interaction alters MGRN1 subcellular location and causes lysosomal enlargement. Interacts with KIAA1191.

Its subcellular location is the cell membrane. It localises to the golgi apparatus. Functionally, its primary physiological function is unclear. Has cytoprotective activity against internal or environmental stresses. May play a role in neuronal development and synaptic plasticity. May be required for neuronal myelin sheath maintenance. May play a role in iron uptake and iron homeostasis. Soluble oligomers are toxic to cultured neuroblastoma cells and induce apoptosis (in vitro). Association with GPC1 (via its heparan sulfate chains) targets PRNP to lipid rafts. Also provides Cu(2+) or Zn(2+) for the ascorbate-mediated GPC1 deaminase degradation of its heparan sulfate side chains. The chain is Major prion protein (PRNP) from Antilope cervicapra (Blackbuck).